Here is a 133-residue protein sequence, read N- to C-terminus: Small ribosomal subunit protein uS8 (133 aa).

The protein belongs to the universal ribosomal protein uS8 family. In terms of assembly, part of the 30S ribosomal subunit. Contacts proteins S5 and S12.

Functionally, one of the primary rRNA binding proteins, it binds directly to 16S rRNA central domain where it helps coordinate assembly of the platform of the 30S subunit. The protein is Small ribosomal subunit protein uS8 of Trichormus variabilis (strain ATCC 29413 / PCC 7937) (Anabaena variabilis).